The sequence spans 226 residues: uncharacterized protein (226 aa).

The next 4 membrane-spanning stretches (helical) occupy residues 25 to 45 (ALAWLCDVFLLAIVLVVIFLI), 54 to 74 (FLLFLVLSCSQTILWTVYFIF), 107 to 127 (ELFLWILLSVLFLVIASYFFI), and 153 to 173 (TITILISFLQLIFIGYFCFSS).

It localises to the cell membrane. This is an uncharacterized protein from Mycoplasma genitalium (strain ATCC 33530 / DSM 19775 / NCTC 10195 / G37) (Mycoplasmoides genitalium).